The following is a 218-amino-acid chain: Adenylate kinase (218 aa).

Residue 10 to 15 (GAGKGT) coordinates ATP. Residues 30–59 (STGDMLRAAVKAGTPLGIAAKKIMDEGGLV) form an NMP region. AMP is bound by residues Thr-31, Arg-36, 57-59 (GLV), 85-88 (GFPR), and Gln-92. An LID region spans residues 122-159 (GRRVHPASGRTYHVKFNPPKVAGRDDVTGEELIQRDDD). ATP contacts are provided by residues Arg-123 and 132-133 (TY). AMP-binding residues include Arg-156 and Arg-167. Gly-203 contacts ATP.

This sequence belongs to the adenylate kinase family. Monomer.

The protein localises to the cytoplasm. The enzyme catalyses AMP + ATP = 2 ADP. It participates in purine metabolism; AMP biosynthesis via salvage pathway; AMP from ADP: step 1/1. Functionally, catalyzes the reversible transfer of the terminal phosphate group between ATP and AMP. Plays an important role in cellular energy homeostasis and in adenine nucleotide metabolism. The chain is Adenylate kinase from Herminiimonas arsenicoxydans.